The following is a 446-amino-acid chain: N-succinylarginine dihydrolase (446 aa).

Residues 19 to 28 (AGLSFGNVAS), asparagine 110, and 137 to 138 (HR) contribute to the substrate site. The active site involves glutamate 174. Arginine 213 is a substrate binding site. The active site involves histidine 249. Substrate is bound by residues aspartate 251 and asparagine 364. Cysteine 370 acts as the Nucleophile in catalysis.

Belongs to the succinylarginine dihydrolase family. As to quaternary structure, homodimer.

It catalyses the reaction N(2)-succinyl-L-arginine + 2 H2O + 2 H(+) = N(2)-succinyl-L-ornithine + 2 NH4(+) + CO2. Its pathway is amino-acid degradation; L-arginine degradation via AST pathway; L-glutamate and succinate from L-arginine: step 2/5. In terms of biological role, catalyzes the hydrolysis of N(2)-succinylarginine into N(2)-succinylornithine, ammonia and CO(2). The chain is N-succinylarginine dihydrolase from Burkholderia lata (strain ATCC 17760 / DSM 23089 / LMG 22485 / NCIMB 9086 / R18194 / 383).